Here is a 270-residue protein sequence, read N- to C-terminus: Phosphonates import ATP-binding protein PhnC 2 (270 aa).

In terms of domain architecture, ABC transporter spans 2 to 245 (LVVEGLTCRF…IARELYDLEA (244 aa)). 34–41 (GRSGAGKS) contributes to the ATP binding site.

Belongs to the ABC transporter superfamily. Phosphonates importer (TC 3.A.1.9.1) family. In terms of assembly, the complex is composed of two ATP-binding proteins (PhnC), two transmembrane proteins (PhnE) and a solute-binding protein (PhnD).

It localises to the cell inner membrane. The enzyme catalyses phosphonate(out) + ATP + H2O = phosphonate(in) + ADP + phosphate + H(+). In terms of biological role, part of the ABC transporter complex PhnCDE involved in phosphonates import. Responsible for energy coupling to the transport system. The protein is Phosphonates import ATP-binding protein PhnC 2 of Rhodopseudomonas palustris (strain BisA53).